The following is a 352-amino-acid chain: UDP-N-acetylglucosamine--N-acetylmuramyl-(pentapeptide) pyrophosphoryl-undecaprenol N-acetylglucosamine transferase (352 aa).

UDP-N-acetyl-alpha-D-glucosamine is bound by residues 11–13 (TGG), N120, R161, S188, and Q286.

It belongs to the glycosyltransferase 28 family. MurG subfamily.

It localises to the cell inner membrane. The enzyme catalyses di-trans,octa-cis-undecaprenyl diphospho-N-acetyl-alpha-D-muramoyl-L-alanyl-D-glutamyl-meso-2,6-diaminopimeloyl-D-alanyl-D-alanine + UDP-N-acetyl-alpha-D-glucosamine = di-trans,octa-cis-undecaprenyl diphospho-[N-acetyl-alpha-D-glucosaminyl-(1-&gt;4)]-N-acetyl-alpha-D-muramoyl-L-alanyl-D-glutamyl-meso-2,6-diaminopimeloyl-D-alanyl-D-alanine + UDP + H(+). Its pathway is cell wall biogenesis; peptidoglycan biosynthesis. In terms of biological role, cell wall formation. Catalyzes the transfer of a GlcNAc subunit on undecaprenyl-pyrophosphoryl-MurNAc-pentapeptide (lipid intermediate I) to form undecaprenyl-pyrophosphoryl-MurNAc-(pentapeptide)GlcNAc (lipid intermediate II). This is UDP-N-acetylglucosamine--N-acetylmuramyl-(pentapeptide) pyrophosphoryl-undecaprenol N-acetylglucosamine transferase from Prochlorococcus marinus (strain NATL1A).